Reading from the N-terminus, the 211-residue chain is ATP phosphoribosyltransferase (211 aa).

The protein belongs to the ATP phosphoribosyltransferase family. Short subfamily. In terms of assembly, heteromultimer composed of HisG and HisZ subunits.

The protein resides in the cytoplasm. It carries out the reaction 1-(5-phospho-beta-D-ribosyl)-ATP + diphosphate = 5-phospho-alpha-D-ribose 1-diphosphate + ATP. It functions in the pathway amino-acid biosynthesis; L-histidine biosynthesis; L-histidine from 5-phospho-alpha-D-ribose 1-diphosphate: step 1/9. Functionally, catalyzes the condensation of ATP and 5-phosphoribose 1-diphosphate to form N'-(5'-phosphoribosyl)-ATP (PR-ATP). Has a crucial role in the pathway because the rate of histidine biosynthesis seems to be controlled primarily by regulation of HisG enzymatic activity. The protein is ATP phosphoribosyltransferase of Pseudomonas syringae pv. tomato (strain ATCC BAA-871 / DC3000).